A 192-amino-acid polypeptide reads, in one-letter code: UPF0149 protein KPN78578_32810 (192 aa).

The protein belongs to the UPF0149 family.

This Klebsiella pneumoniae subsp. pneumoniae (strain ATCC 700721 / MGH 78578) protein is UPF0149 protein KPN78578_32810.